Reading from the N-terminus, the 251-residue chain is 1-(5-phosphoribosyl)-5-[(5-phosphoribosylamino)methylideneamino] imidazole-4-carboxamide isomerase (251 aa).

Catalysis depends on Asp-8, which acts as the Proton acceptor. Asp-129 acts as the Proton donor in catalysis.

Belongs to the HisA/HisF family.

It is found in the cytoplasm. It carries out the reaction 1-(5-phospho-beta-D-ribosyl)-5-[(5-phospho-beta-D-ribosylamino)methylideneamino]imidazole-4-carboxamide = 5-[(5-phospho-1-deoxy-D-ribulos-1-ylimino)methylamino]-1-(5-phospho-beta-D-ribosyl)imidazole-4-carboxamide. Its pathway is amino-acid biosynthesis; L-histidine biosynthesis; L-histidine from 5-phospho-alpha-D-ribose 1-diphosphate: step 4/9. The sequence is that of 1-(5-phosphoribosyl)-5-[(5-phosphoribosylamino)methylideneamino] imidazole-4-carboxamide isomerase from Desulfosudis oleivorans (strain DSM 6200 / JCM 39069 / Hxd3) (Desulfococcus oleovorans).